Here is a 362-residue protein sequence, read N- to C-terminus: Porin Omp2b (362 aa).

Positions 1 to 22 are cleaved as a signal peptide; the sequence is MNIKSLLLGSAAALVAASGAQA.

This sequence belongs to the alphaproteobacteria porin family. As to quaternary structure, homotrimer.

It is found in the cell outer membrane. Forms passive diffusion pores that allow small molecular weight hydrophilic materials across the outer membrane. This chain is Porin Omp2b (omp2b), found in Brucella abortus (strain S19).